The following is a 252-amino-acid chain: Receptor expression-enhancing protein 3-B (252 aa).

The next 3 helical transmembrane spans lie at 1-21, 35-55, and 57-77; these read MVSG…YPAY, YVRW…ETIA, and LTVS…VWLL. Positions 163–225 are disordered; that stretch reads ETAETRFFPD…GLRRSQSMRS (63 aa). Acidic residues predominate over residues 198-211; the sequence is RTDEDVEVNSEDEV.

It belongs to the DP1 family.

The protein resides in the endoplasmic reticulum membrane. Its function is as follows. Microtubule-binding protein required to ensure proper cell division and nuclear envelope reassembly by sequestering the endoplasmic reticulum away from chromosomes during mitosis. Probably acts by clearing the endoplasmic reticulum membrane from metaphase chromosomes. This Xenopus laevis (African clawed frog) protein is Receptor expression-enhancing protein 3-B (reep3-b).